The following is a 70-amino-acid chain: uncharacterized protein (70 aa).

This is an uncharacterized protein from Vaccinia virus (strain Copenhagen) (VACV).